The chain runs to 116 residues: MQIHVVKSKIHRVKVTGADLDYIGSITIDEDLMEAASIIEGEKVQIVNNNNGERLETYVIPGLRNTGEITLNGAAARKVAKGDILIIIAYGIMELEEARNFKPSLVFPDEETNLLK.

Ser25 acts as the Schiff-base intermediate with substrate; via pyruvic acid in catalysis. Ser25 is subject to Pyruvic acid (Ser). Position 57 (Thr57) interacts with substrate. The Proton donor role is filled by Tyr58. Position 73–75 (73–75) interacts with substrate; sequence GAA.

The protein belongs to the PanD family. Heterooctamer of four alpha and four beta subunits. Requires pyruvate as cofactor. Post-translationally, is synthesized initially as an inactive proenzyme, which is activated by self-cleavage at a specific serine bond to produce a beta-subunit with a hydroxyl group at its C-terminus and an alpha-subunit with a pyruvoyl group at its N-terminus.

It localises to the cytoplasm. The catalysed reaction is L-aspartate + H(+) = beta-alanine + CO2. Its pathway is cofactor biosynthesis; (R)-pantothenate biosynthesis; beta-alanine from L-aspartate: step 1/1. Catalyzes the pyruvoyl-dependent decarboxylation of aspartate to produce beta-alanine. This Christiangramia forsetii (strain DSM 17595 / CGMCC 1.15422 / KT0803) (Gramella forsetii) protein is Aspartate 1-decarboxylase.